We begin with the raw amino-acid sequence, 98 residues long: Keratin, high sulfur matrix protein, IIIB4 (98 aa).

Ala1 is subject to N-acetylalanine.

The protein belongs to the KRTAP type 3 family. Interacts with wool keratins. As to expression, wool.

Its function is as follows. In the wool cortex, wool keratin intermediate filaments are embedded in an interfilamentous matrix, consisting of hair keratin-associated proteins (KRTAP), which are essential for the formation of a rigid and resistant wool shaft through their extensive disulfide bond cross-linking with abundant cysteine residues of wool keratins. The matrix proteins include the high-sulfur and high-glycine-tyrosine keratins. This Ovis aries (Sheep) protein is Keratin, high sulfur matrix protein, IIIB4.